The primary structure comprises 404 residues: Subtilisin-like protease 3 (404 aa).

The N-terminal stretch at 1-20 is a signal peptide; that stretch reads MLFSKSLVALVACFLPLIVS. The propeptide occupies 21-114; sequence ATELKLRNAA…VDKDVKVSAY (94 aa). Residues 38 to 112 enclose the Inhibitor I9 domain; that stretch reads SYIVVYKDID…AYVDKDVKVS (75 aa). Residues 123–404 enclose the Peptidase S8 domain; it reads PWGLDRISHR…DNLAYNDDGY (282 aa). N-linked (GlcNAc...) asparagine glycosylation is present at asparagine 133. Residues aspartate 158 and histidine 190 each act as charge relay system in the active site. Asparagine 243, asparagine 251, asparagine 286, asparagine 307, and asparagine 340 each carry an N-linked (GlcNAc...) asparagine glycan. The active-site Charge relay system is the serine 347. Asparagine 366 carries N-linked (GlcNAc...) asparagine glycosylation.

This sequence belongs to the peptidase S8 family.

The protein resides in the secreted. Functionally, secreted subtilisin-like serine endopeptidase. Mediates the degradation of collagen, the major structural protein in the mammalian host. Degrades the nonhelical regions of collagen that function in the cross-linking of the helical components. May function as virulence factor involved in epidermal wing necrosis observed in white nose syndrome (WNS) in bats. The sequence is that of Subtilisin-like protease 3 from Pseudogymnoascus destructans (strain ATCC MYA-4855 / 20631-21) (Bat white-nose syndrome fungus).